Reading from the N-terminus, the 122-residue chain is Large ribosomal subunit protein bL12 (122 aa).

Residues G94 to K122 are disordered. Residues G99–E114 show a composition bias toward basic and acidic residues.

This sequence belongs to the bacterial ribosomal protein bL12 family. As to quaternary structure, homodimer. Part of the ribosomal stalk of the 50S ribosomal subunit. Forms a multimeric L10(L12)X complex, where L10 forms an elongated spine to which 2 to 4 L12 dimers bind in a sequential fashion. Binds GTP-bound translation factors.

Functionally, forms part of the ribosomal stalk which helps the ribosome interact with GTP-bound translation factors. Is thus essential for accurate translation. In Halanaerobium praevalens, this protein is Large ribosomal subunit protein bL12.